The primary structure comprises 201 residues: Diadenylate cyclase CdaS (201 aa).

The 148-residue stretch at glutamine 54 to leucine 201 folds into the DAC domain.

Belongs to the adenylate cyclase family. DacB/CdaS subfamily. As to quaternary structure, probably forms a homohexamer. The cofactor is Mg(2+).

The catalysed reaction is 2 ATP = 3',3'-c-di-AMP + 2 diphosphate. In terms of biological role, one of 3 paralogous diadenylate cyclases (DAC) in this bacteria catalyzing the condensation of 2 ATP molecules into cyclic di-AMP (c-di-AMP). It has slow DAC activity with ADP as a substrate and may have weak ADPase activity. Required for efficient spore formation, whereas in B.subtilis, it is required for efficient spore germination. It is produced under the control of different sigma factors in the two bacteria. It is also required for parasporal crystal formation. This Bacillus thuringiensis (strain BMB171) protein is Diadenylate cyclase CdaS.